We begin with the raw amino-acid sequence, 209 residues long: Large ribosomal subunit protein uL4 (209 aa).

The disordered stretch occupies residues 45 to 80 (RQGTHKAKERSELSGSTRKLIRQKGSGGARRGDINS).

This sequence belongs to the universal ribosomal protein uL4 family. Part of the 50S ribosomal subunit.

One of the primary rRNA binding proteins, this protein initially binds near the 5'-end of the 23S rRNA. It is important during the early stages of 50S assembly. It makes multiple contacts with different domains of the 23S rRNA in the assembled 50S subunit and ribosome. Functionally, forms part of the polypeptide exit tunnel. The polypeptide is Large ribosomal subunit protein uL4 (Porphyromonas gingivalis (strain ATCC BAA-308 / W83)).